Consider the following 1148-residue polypeptide: Protocadherin-19 (1148 aa).

A signal peptide spans 1–21 (MESLLLPVLLLLAILWTQAAA). Cadherin domains lie at 22–129 (LINL…APSF), 130–238 (PAAQ…NPVF), 239–346 (SEST…PPVI), 350–453 (SVNS…HPHF), 454–563 (SKPY…TPVI), and 569–672 (INGT…QESM). At 22-678 (LINLKYSVEE…QESMGSVNLS (657 aa)) the chain is on the extracellular side. Ca(2+) is bound by residues Glu-31, Glu-32, Asp-88, and Asp-90. Cys-93 and Cys-99 are oxidised to a cystine. Residues Asp-121, Asn-123, Asp-124, Asn-125, Glu-140, Asp-155, Asp-157, Glu-199, Asp-212, Asp-230, Ser-231, Asn-232, Asp-233, Asn-234, and Glu-249 each coordinate Ca(2+). Asn-261 carries an N-linked (GlcNAc...) asparagine glycan. Residues Asp-264, Asp-266, Asn-270, Asp-305, Glu-307, Asp-338, Asn-340, Asp-341, Asn-342, Glu-360, Asp-375, Asp-377, Asn-381, Asp-412, and Glu-414 each coordinate Ca(2+). N-linked (GlcNAc...) asparagine glycosylation is present at Asn-420. Ca(2+)-binding residues include Asp-427, Asp-445, Glu-446, Asn-447, Asp-448, Asn-449, Glu-464, Asp-479, Asp-481, Asn-485, Asn-522, Glu-524, and Asp-537. N-linked (GlcNAc...) asparagine glycosylation occurs at Asn-485. Asn-546 carries an N-linked (GlcNAc...) asparagine glycan. Asp-555, Val-556, Asn-557, Asp-558, and Asn-559 together coordinate Ca(2+). A glycan (N-linked (GlcNAc...) asparagine) is linked at Asn-570. The Ca(2+) site is built by Asp-594, Asp-596, Asn-600, and Asp-646. Asn-676 is a glycosylation site (N-linked (GlcNAc...) asparagine). Residues 679–699 (LIFIIALGSIAGILFVTMIFV) form a helical membrane-spanning segment. Residues 700–1148 (AIKCKRDNKE…GVKRLKDIVL (449 aa)) lie on the Cytoplasmic side of the membrane. Disordered regions lie at residues 901 to 921 (GNSL…EHDV) and 1100 to 1148 (NVNN…DIVL). Basic and acidic residues-rich tracts occupy residues 906-921 (DSGH…EHDV), 1109-1123 (SEAE…KVMH), and 1130-1148 (KEGR…DIVL).

Homodimer; antiparallel. As to expression, moderately expressed in all regions of the brain examined, with lowest levels found in the cerebellum. Moderate expression is also found in ovary, and low expression in all other tissues tested. Also detected in primary skin fibroblast.

It is found in the cell membrane. Its function is as follows. Calcium-dependent cell-adhesion protein. This chain is Protocadherin-19 (PCDH19), found in Homo sapiens (Human).